The chain runs to 73 residues: Putative beta-defensin 108A (73 aa).

The N-terminal stretch at 1 to 22 is a signal peptide; sequence MRIAVLFFTIFFFMSQVLPAKG. Disulfide bonds link cysteine 28–cysteine 55, cysteine 35–cysteine 49, and cysteine 39–cysteine 56.

The protein belongs to the beta-defensin family.

Its subcellular location is the secreted. Its function is as follows. Has antibacterial activity. The protein is Putative beta-defensin 108A of Homo sapiens (Human).